The primary structure comprises 850 residues: Pre-mRNA-splicing factor SYF1 (850 aa).

HAT repeat units follow at residues Ile-25 to Gly-57, Ser-58 to Leu-90, Asn-100 to Ile-132, Glu-134 to Lys-168, Ile-171 to Glu-203, Ala-281 to Ser-316, Lys-477 to Ser-509, Gly-511 to Glu-543, Lys-545 to Gln-579, Met-584 to Gln-618, and Gly-692 to Leu-726. Residues Asn-761–Gln-771 show a composition bias toward basic and acidic residues. A disordered region spans residues Asn-761–Leu-837. The segment covering Gln-772–Gln-792 has biased composition (low complexity). Polar residues predominate over residues Ala-793–Tyr-812. Residues Asn-818–Gln-836 show a composition bias toward acidic residues.

The protein belongs to the crooked-neck family. As to quaternary structure, identified in the spliceosome C complex.

It localises to the nucleus. In terms of biological role, involved in pre-mRNA splicing as component of the spliceosome. Involved in transcription-coupled repair (TCR), transcription and pre-mRNA splicing. This is Pre-mRNA-splicing factor SYF1 (xab2) from Dictyostelium discoideum (Social amoeba).